A 360-amino-acid chain; its full sequence is Peptide chain release factor 1 (360 aa).

Residue Gln-235 is modified to N5-methylglutamine.

This sequence belongs to the prokaryotic/mitochondrial release factor family. Post-translationally, methylated by PrmC. Methylation increases the termination efficiency of RF1.

It is found in the cytoplasm. Peptide chain release factor 1 directs the termination of translation in response to the peptide chain termination codons UAG and UAA. This is Peptide chain release factor 1 from Burkholderia thailandensis (strain ATCC 700388 / DSM 13276 / CCUG 48851 / CIP 106301 / E264).